The chain runs to 131 residues: Small ribosomal subunit protein eS17 (131 aa).

It belongs to the eukaryotic ribosomal protein eS17 family.

This is Small ribosomal subunit protein eS17 (RpS17) from Drosophila melanogaster (Fruit fly).